The following is a 247-amino-acid chain: GYNKSLRYSRHAGTSCLIDNQHYKQIASNGKDVRRKDRRISEAKYAPLKDLANQYMVTEDPFRGPGKNVRITLFKEIRRVEPDTHKLICNWSGKEFLRETWTRFISEEFPITTDQQIMNLLFELQLRPMQPNRCYRFTMQYALGAHPDYVAHDVIRQGDPYYVGPNQIERINLSKKGYAYPLTCLQSVYNENFDFFFDEHLWPYFHRPLVYVGMNSAEIEEIMIEVSVIFKIKEFAPDVPLFTGPAY.

Belongs to the polyhedrin family.

In terms of biological role, component of the virus occlusion bodies, which are large proteinaceous structures, that protect the virus from the outside environment for extended periods until they are ingested by insect larvae. This is Granulin from Agrotis segetum granulosis virus (AsGV).